A 1147-amino-acid polypeptide reads, in one-letter code: Myosin light chain kinase, smooth muscle (1147 aa).

The tract at residues 1 to 41 (MDFRANLQRQVKPKTVSEEERKVHSPQQVDFRSVLAKKGTP) is actin-binding. The segment at 1 to 330 (MDFRANLQRQ…PPASPGTAPT (330 aa)) is disordered. A calmodulin-binding region spans residues 26–41 (PQQVDFRSVLAKKGTP). Positions 43-55 (TPVPEKAPPPKPA) are enriched in pro residues. 2 consecutive repeat copies span residues 100–111 (SLKPVANAKPAE) and 112–123 (TLKPVANTKPAE). The interval 100–288 (SLKPVANAKP…KAVANAKPAE (189 aa)) is 16 X 12 AA tandem repeats. Residues 124–132 (TLKPVANAE) form a 3; truncated repeat. 13 tandem repeats follow at residues 133 to 144 (TLKPMGNAKPAE), 145 to 156 (SSKPVGNTKPAE), 157 to 168 (TLKPVGNTKPAE), 169 to 180 (TLKPVGNIKPAE), 181 to 192 (TLKPVGNIKPAE), 193 to 204 (TLKPVGNTKPTE), 205 to 216 (TLKPVANAKSAE), 217 to 228 (TLKPIANTKPAE), 229 to 240 (TLKPVGNAKPAE), 241 to 252 (TLKPVGNAKPAE), 253 to 264 (TLKPVGNAKPAE), 265 to 276 (TLKPVGNAKPAE), and 277 to 288 (TLKAVANAKPAE). Positions 292–692 (PAGKEELKKE…TVTVNTEQKV (401 aa)) are actin-binding (calcium/calmodulin-insensitive). Positions 293–320 (AGKEELKKEVQNDVNCKREKAGAADNEK) are enriched in basic and acidic residues. 2 Ig-like C2-type domains span residues 329–417 (PTFK…CHVT) and 469–557 (PQIP…VNLT). Cysteines 350 and 401 form a disulfide. Disordered regions lie at residues 424 to 476 (SENA…QFPE) and 644 to 678 (SEPS…KEPE). Over residues 459-472 (PKTPPKAATPPQIP) the composition is skewed to pro residues. Positions 565 to 657 (PAGTPCASDI…QESELTTVGE (93 aa)) constitute a Fibronectin type-III domain. Residues 644-653 (SEPSQESELT) show a composition bias toward polar residues. Acidic residues predominate over residues 662–677 (PKDEVEEVSDDDEKEP). Phosphoserine is present on Ser670. Position 681 is a phosphotyrosine; by ABL1 (Tyr681). The region spanning 696–951 (YDIEERLGSG…CTQCLQHPWL (256 aa)) is the Protein kinase domain. ATP-binding positions include 702 to 710 (LGSGKFGQV) and Lys725. Tyr807 carries the post-translational modification Phosphotyrosine; by ABL1. The active-site Proton acceptor is Asp817. Phosphotyrosine; by ABL1 is present on Tyr867. The interval 943–1006 (TQCLQHPWLM…SGLSGRKSST (64 aa)) is calmodulin-binding. Phosphoserine occurs at positions 991, 992, 1004, 1005, and 1008. A disordered region spans residues 999–1019 (LSGRKSSTGSPTSPLTAERLE). Residues 1002–1013 (RKSSTGSPTSPL) are compositionally biased toward polar residues. Thr1010 is modified (phosphothreonine). Ser1011 is subject to Phosphoserine. The Ig-like C2-type 3 domain occupies 1041–1130 (PYFSKTIRDL…GEATCTAELI (90 aa)). Cysteines 1062 and 1114 form a disulfide.

Belongs to the protein kinase superfamily. CAMK Ser/Thr protein kinase family. As to quaternary structure, all isoforms including Telokin bind calmodulin. Interacts with SVIL. Interacts with CTTN; this interaction is reduced during thrombin-induced endothelial cell (EC) contraction but is promoted by the barrier-protective agonist sphingosine 1-phosphate (S1P) within lamellipodia. A complex made of ABL1, CTTN and MYLK regulates cortical actin-based cytoskeletal rearrangement critical to sphingosine 1-phosphate (S1P)-mediated endothelial cell (EC) barrier enhancement. Binds to NAA10/ARD1 and PTK2B/PYK2. Mg(2+) serves as cofactor. Requires Ca(2+) as cofactor. The C-terminus is deglutamylated by AGTPBP1/CCP1, AGBL1/CCP4 and AGBL4/CCP6, leading to the formation of Myosin light chain kinase, smooth muscle, deglutamylated form. The consequences of C-terminal deglutamylation are unknown. Post-translationally, can probably be down-regulated by phosphorylation. Tyrosine phosphorylation by ABL1 increases kinase activity, reverses MLCK-mediated inhibition of Arp2/3-mediated actin polymerization, and enhances CTTN-binding. Phosphorylation by SRC promotes CTTN binding. As to expression, isoform Telokin is found in all smooth muscle tested except the aorta. It is not present in non-muscle tissue.

It is found in the cytoplasm. It localises to the cell projection. Its subcellular location is the lamellipodium. The protein resides in the cleavage furrow. The protein localises to the cytoskeleton. It is found in the stress fiber. It catalyses the reaction L-seryl-[myosin light chain] + ATP = O-phospho-L-seryl-[myosin light chain] + ADP + H(+). It carries out the reaction L-threonyl-[myosin light chain] + ATP = O-phospho-L-threonyl-[myosin light chain] + ADP + H(+). All catalytically active isoforms require binding to calcium and calmodulin for activation. Calcium/calmodulin-dependent myosin light chain kinase implicated in smooth muscle contraction via phosphorylation of myosin light chains (MLC). Also regulates actin-myosin interaction through a non-kinase activity. Phosphorylates PTK2B/PYK2 and myosin light-chains. Involved in the inflammatory response (e.g. apoptosis, vascular permeability, leukocyte diapedesis), cell motility and morphology, airway hyperreactivity and other activities relevant to asthma. Required for tonic airway smooth muscle contraction that is necessary for physiological and asthmatic airway resistance. Necessary for gastrointestinal motility. Implicated in the regulation of endothelial as well as vascular permeability, probably via the regulation of cytoskeletal rearrangements. In the nervous system it has been shown to control the growth initiation of astrocytic processes in culture and to participate in transmitter release at synapses formed between cultured sympathetic ganglion cells. Critical participant in signaling sequences that result in fibroblast apoptosis. Plays a role in the regulation of epithelial cell survival. Required for epithelial wound healing, especially during actomyosin ring contraction during purse-string wound closure. Mediates RhoA-dependent membrane blebbing. Triggers TRPC5 channel activity in a calcium-dependent signaling, by inducing its subcellular localization at the plasma membrane. Promotes cell migration (including tumor cells) and tumor metastasis. PTK2B/PYK2 activation by phosphorylation mediates ITGB2 activation and is thus essential to trigger neutrophil transmigration during acute lung injury (ALI). May regulate optic nerve head astrocyte migration. Probably involved in mitotic cytoskeletal regulation. Regulates tight junction probably by modulating ZO-1 exchange in the perijunctional actomyosin ring. Mediates burn-induced microvascular barrier injury; triggers endothelial contraction in the development of microvascular hyperpermeability by phosphorylating MLC. Essential for intestinal barrier dysfunction. Mediates Giardia spp.-mediated reduced epithelial barrier function during giardiasis intestinal infection via reorganization of cytoskeletal F-actin and tight junctional ZO-1. Necessary for hypotonicity-induced Ca(2+) entry and subsequent activation of volume-sensitive organic osmolyte/anion channels (VSOAC) in cervical cancer cells. The chain is Myosin light chain kinase, smooth muscle (MYLK) from Oryctolagus cuniculus (Rabbit).